Here is a 187-residue protein sequence, read N- to C-terminus: UPF0301 protein Sala_0165 (187 aa).

It belongs to the UPF0301 (AlgH) family.

In Sphingopyxis alaskensis (strain DSM 13593 / LMG 18877 / RB2256) (Sphingomonas alaskensis), this protein is UPF0301 protein Sala_0165.